The following is a 331-amino-acid chain: 6-phosphogluconolactonase (331 aa).

Lys287 carries the post-translational modification N6-acetyllysine.

This sequence belongs to the cycloisomerase 2 family.

The enzyme catalyses 6-phospho-D-glucono-1,5-lactone + H2O = 6-phospho-D-gluconate + H(+). It participates in carbohydrate degradation; pentose phosphate pathway; D-ribulose 5-phosphate from D-glucose 6-phosphate (oxidative stage): step 2/3. Functionally, catalyzes the hydrolysis of 6-phosphogluconolactone to 6-phosphogluconate. This is 6-phosphogluconolactonase from Escherichia coli O139:H28 (strain E24377A / ETEC).